Consider the following 284-residue polypeptide: Bifunctional protein FolD (284 aa).

Residues 166–168 and Ile-232 each bind NADP(+); that span reads GAS.

The protein belongs to the tetrahydrofolate dehydrogenase/cyclohydrolase family. In terms of assembly, homodimer.

The catalysed reaction is (6R)-5,10-methylene-5,6,7,8-tetrahydrofolate + NADP(+) = (6R)-5,10-methenyltetrahydrofolate + NADPH. The enzyme catalyses (6R)-5,10-methenyltetrahydrofolate + H2O = (6R)-10-formyltetrahydrofolate + H(+). It functions in the pathway one-carbon metabolism; tetrahydrofolate interconversion. Catalyzes the oxidation of 5,10-methylenetetrahydrofolate to 5,10-methenyltetrahydrofolate and then the hydrolysis of 5,10-methenyltetrahydrofolate to 10-formyltetrahydrofolate. The protein is Bifunctional protein FolD of Shewanella sp. (strain MR-7).